Here is a 245-residue protein sequence, read N- to C-terminus: 5-oxoprolinase subunit A (245 aa).

It belongs to the LamB/PxpA family. As to quaternary structure, forms a complex composed of PxpA, PxpB and PxpC.

It catalyses the reaction 5-oxo-L-proline + ATP + 2 H2O = L-glutamate + ADP + phosphate + H(+). Functionally, catalyzes the cleavage of 5-oxoproline to form L-glutamate coupled to the hydrolysis of ATP to ADP and inorganic phosphate. The polypeptide is 5-oxoprolinase subunit A (Neisseria meningitidis serogroup A / serotype 4A (strain DSM 15465 / Z2491)).